A 382-amino-acid polypeptide reads, in one-letter code: Processive diacylglycerol beta-glucosyltransferase (382 aa).

This sequence belongs to the glycosyltransferase 28 family. UgtP subfamily.

The protein resides in the cell membrane. It catalyses the reaction a 1,2-diacyl-3-O-(beta-D-glucopyranosyl)-sn-glycerol + UDP-alpha-D-glucose = a 1,2-diacyl-3-O-(beta-D-Glc-(1-&gt;6)-beta-D-Glc)-sn-glycerol + UDP + H(+). The catalysed reaction is a 1,2-diacyl-3-O-(beta-D-Glc-(1-&gt;6)-beta-D-Glc)-sn-glycerol + UDP-alpha-D-glucose = a 1,2-diacyl-3-O-(beta-D-Glc-(1-&gt;6)-beta-D-Glc-(1-&gt;6)-beta-D-Glc)-sn-glycerol + UDP + H(+). It carries out the reaction a 1,2-diacyl-sn-glycerol + UDP-alpha-D-glucose = a 1,2-diacyl-3-O-(beta-D-glucopyranosyl)-sn-glycerol + UDP + H(+). It participates in glycolipid metabolism; diglucosyl-diacylglycerol biosynthesis. Its function is as follows. Processive glucosyltransferase involved in the biosynthesis of both the bilayer- and non-bilayer-forming membrane glucolipids. Is able to successively transfer up to three glucosyl residues to diacylglycerol (DAG), thereby catalyzing the formation of beta-monoglucosyl-DAG (3-O-(beta-D-glucopyranosyl)-1,2-diacyl-sn-glycerol), beta-diglucosyl-DAG (3-O-(beta-D-glucopyranosyl-beta-(1-&gt;6)-D-glucopyranosyl)-1,2-diacyl-sn-glycerol) and beta-triglucosyl-DAG (3-O-(beta-D-glucopyranosyl-beta-(1-&gt;6)-D-glucopyranosyl-beta-(1-&gt;6)-D-glucopyranosyl)-1,2-diacyl-sn-glycerol). Beta-diglucosyl-DAG is the predominant glycolipid found in Bacillales and is also used as a membrane anchor for lipoteichoic acid (LTA). Also seems to be able to form beta-tetraglucosyl-DAG, although this glycolipid has not been found in B.subtilis membrane. UgtP can only use UDP-glucose as sugar donor. This Bacillus subtilis (strain 168) protein is Processive diacylglycerol beta-glucosyltransferase.